Here is a 237-residue protein sequence, read N- to C-terminus: Orotidine 5'-phosphate decarboxylase (237 aa).

Substrate is bound by residues aspartate 17, lysine 39, 66-75 (DLKLHDIGNT), threonine 121, arginine 182, glutamine 191, glycine 211, and arginine 212. The active-site Proton donor is the lysine 68.

It belongs to the OMP decarboxylase family. Type 1 subfamily. As to quaternary structure, homodimer.

The catalysed reaction is orotidine 5'-phosphate + H(+) = UMP + CO2. Its pathway is pyrimidine metabolism; UMP biosynthesis via de novo pathway; UMP from orotate: step 2/2. In terms of biological role, catalyzes the decarboxylation of orotidine 5'-monophosphate (OMP) to uridine 5'-monophosphate (UMP). The chain is Orotidine 5'-phosphate decarboxylase from Rhodopseudomonas palustris (strain ATCC BAA-98 / CGA009).